The sequence spans 386 residues: S-adenosylmethionine synthase (386 aa).

Histidine 16 provides a ligand contact to ATP. Aspartate 18 provides a ligand contact to Mg(2+). Residue glutamate 44 participates in K(+) binding. Positions 57 and 100 each coordinate L-methionine. The interval 100–110 (QSRDITQGVDR) is flexible loop. Residues 165-167 (DAK), aspartate 240, 246-247 (RK), alanine 263, and lysine 267 contribute to the ATP site. Residue aspartate 240 participates in L-methionine binding. Position 271 (lysine 271) interacts with L-methionine.

Belongs to the AdoMet synthase family. In terms of assembly, homotetramer; dimer of dimers. The cofactor is Mg(2+). K(+) is required as a cofactor.

The protein localises to the cytoplasm. It catalyses the reaction L-methionine + ATP + H2O = S-adenosyl-L-methionine + phosphate + diphosphate. The protein operates within amino-acid biosynthesis; S-adenosyl-L-methionine biosynthesis; S-adenosyl-L-methionine from L-methionine: step 1/1. In terms of biological role, catalyzes the formation of S-adenosylmethionine (AdoMet) from methionine and ATP. The overall synthetic reaction is composed of two sequential steps, AdoMet formation and the subsequent tripolyphosphate hydrolysis which occurs prior to release of AdoMet from the enzyme. The sequence is that of S-adenosylmethionine synthase from Francisella tularensis subsp. tularensis (strain WY96-3418).